Here is a 162-residue protein sequence, read N- to C-terminus: Disulfide bond formation protein B (162 aa).

At 1-8 (MTPLFRKA) the chain is on the cytoplasmic side. The chain crosses the membrane as a helical span at residues 9–25 (VWLLFAVSVCAFAGSLA). Residues 26-43 (AQYVLGMEPCVLCISQRL) lie on the Periplasmic side of the membrane. C35 and C38 are disulfide-bonded. A helical transmembrane segment spans residues 44–60 (CVLATALCTAIVLMCRP). Over 61-67 (RRRAGGL) the chain is Cytoplasmic. Residues 68–85 (FGAVFISIPAVTGISVAA) form a helical membrane-spanning segment. Over 86 to 141 (YQLWLQSLPPGTAPSCGAPWTFRLKGWSLFDWFEPVVRGFGNCAEPDYLLGVALPV) the chain is Periplasmic. C101 and C128 are joined by a disulfide. The helical transmembrane segment at 142 to 160 (WSAAYFLAVVLTVWWAWAR) threads the bilayer. At 161–162 (AK) the chain is on the cytoplasmic side.

This sequence belongs to the DsbB family.

It is found in the cell inner membrane. In terms of biological role, required for disulfide bond formation in some periplasmic proteins. Acts by oxidizing the DsbA protein. The chain is Disulfide bond formation protein B from Neisseria meningitidis serogroup C / serotype 2a (strain ATCC 700532 / DSM 15464 / FAM18).